A 359-amino-acid chain; its full sequence is Peptide chain release factor 1 (359 aa).

Q233 carries the post-translational modification N5-methylglutamine.

Belongs to the prokaryotic/mitochondrial release factor family. Methylated by PrmC. Methylation increases the termination efficiency of RF1.

It localises to the cytoplasm. Peptide chain release factor 1 directs the termination of translation in response to the peptide chain termination codons UAG and UAA. This is Peptide chain release factor 1 from Orientia tsutsugamushi (strain Ikeda) (Rickettsia tsutsugamushi).